Reading from the N-terminus, the 241-residue chain is Endodeoxyribonuclease NucC (241 aa).

Active-site residues include D73, E104, and K106. Mg(2+) contacts are provided by D73 and E104.

It belongs to the NucC endonuclease family. Self-oligomerizes. Forms homotrimers; in the presence of cAAA the trimers associate face-to-face to form homohexamers. The 2 cAAA-binding sites are on the exterior of the hexamer at the three-way junction, there are maximally 2 cyclic nucleotides per hexamer. It depends on Mg(2+) as a cofactor.

Its activity is regulated as follows. Activated by cAAA and to a lesser extent cAA; both cyclic nucleotides are products of its cognate CD-NTase. Cyclic nucleotide binding causes hexamerization. In terms of biological role, effector DNase of a CBASS antivirus system. CBASS (cyclic oligonucleotide-based antiphage signaling system) provides immunity against bacteriophage. The CD-NTase protein synthesizes cyclic nucleotides in response to infection; these serve as specific second messenger signals. The signals activate a diverse range of effectors, leading to bacterial cell death and thus abortive phage infection. A type III-C(AAA) CBASS system. Functionally, a cyclic nucleotide-activated dsDNase. In the presence of 3',3',3'-cyclic AMP-AMP-AMP (cAAA) and to a lesser extent cyclic-di-AMP (c-di-AMP), endonucleolytically degrades dsDNA. Binds one cAAA in a pocket on one surface of the trimer; cAAA binding promotes hexamerization which is probably necessary for nuclease activation. The nuclease digests dsDNA to about 50 bp lengths. DNA has been modeled to contact a pair of juxtaposed active sites (one from each layer of the hexamer), accounting for cleavage on both strands. This is Endodeoxyribonuclease NucC from Pseudomonas aeruginosa.